The sequence spans 271 residues: uncharacterized protein (271 aa).

Belongs to the HAD-like hydrolase superfamily.

This is an uncharacterized protein from Staphylococcus aureus (strain Mu50 / ATCC 700699).